Reading from the N-terminus, the 188-residue chain is GTPase KRas (188 aa).

GTP-binding positions include G10–A18, V29–T35, A59–G60, and N116–D119. The Effector region motif lies at Y32–Y40. The tract at residues K167–M188 is disordered. Cysteine methyl ester is present on C185. C185 is lipidated: S-farnesyl cysteine. A propeptide spans I186–M188 (removed in mature form).

Belongs to the small GTPase superfamily. Ras family.

The protein resides in the cell membrane. Its subcellular location is the cytoplasm. It carries out the reaction GTP + H2O = GDP + phosphate + H(+). With respect to regulation, alternates between an inactive form bound to GDP and an active form bound to GTP. Activated by a guanine nucleotide-exchange factor (GEF) and inactivated by a GTPase-activating protein (GAP). Functionally, ras proteins bind GDP/GTP and possess intrinsic GTPase activity. Plays an important role in the regulation of cell proliferation. The polypeptide is GTPase KRas (kras1) (Oryzias latipes (Japanese rice fish)).